The following is a 183-amino-acid chain: Hypoxanthine-guanine phosphoribosyltransferase (183 aa).

Residues Arg-47 and Gly-48 each coordinate diphosphate. 2 residues coordinate Mg(2+): Glu-103 and Asp-104. The active-site Proton acceptor is the Asp-107. GMP contacts are provided by residues Lys-134, 155 to 156 (FV), and Asp-162. Arg-168 is a binding site for diphosphate.

It belongs to the purine/pyrimidine phosphoribosyltransferase family. The cofactor is Mg(2+).

The protein localises to the cytoplasm. The enzyme catalyses IMP + diphosphate = hypoxanthine + 5-phospho-alpha-D-ribose 1-diphosphate. It carries out the reaction GMP + diphosphate = guanine + 5-phospho-alpha-D-ribose 1-diphosphate. Its pathway is purine metabolism; IMP biosynthesis via salvage pathway; IMP from hypoxanthine: step 1/1. The protein operates within purine metabolism; GMP biosynthesis via salvage pathway; GMP from guanine: step 1/1. In terms of biological role, purine salvage pathway enzyme that catalyzes the transfer of the ribosyl-5-phosphate group from 5-phospho-alpha-D-ribose 1-diphosphate (PRPP) to the N9 position of the 6-oxopurines hypoxanthine and guanine to form the corresponding ribonucleotides IMP (inosine 5'-monophosphate) and GMP (guanosine 5'-monophosphate), with the release of PPi. The sequence is that of Hypoxanthine-guanine phosphoribosyltransferase (hpt) from Lactococcus lactis subsp. lactis (strain IL1403) (Streptococcus lactis).